A 309-amino-acid chain; its full sequence is Ribonuclease Z (309 aa).

Zn(2+)-binding residues include histidine 63, histidine 65, aspartate 67, histidine 68, histidine 141, aspartate 212, and histidine 270. Residue aspartate 67 is the Proton acceptor of the active site.

Belongs to the RNase Z family. In terms of assembly, homodimer. Zn(2+) is required as a cofactor.

The enzyme catalyses Endonucleolytic cleavage of RNA, removing extra 3' nucleotides from tRNA precursor, generating 3' termini of tRNAs. A 3'-hydroxy group is left at the tRNA terminus and a 5'-phosphoryl group is left at the trailer molecule.. Zinc phosphodiesterase, which displays some tRNA 3'-processing endonuclease activity. Probably involved in tRNA maturation, by removing a 3'-trailer from precursor tRNA. The sequence is that of Ribonuclease Z from Limosilactobacillus reuteri (strain DSM 20016) (Lactobacillus reuteri).